We begin with the raw amino-acid sequence, 763 residues long: MSELLSFALFLASVLIYAWKAGRNTWWFAATLTVLGLFVVLNITLFASDYFTGDGINDAVLYTLTNSLTGAGVSKYILPGIGIVLGLTAVFGALGWILRRRRRHPHHFGYSLLALLLALGSVDASPAFRQITELVKSQSRDGDPDFAAYYKEPSRTIPDPKLNLVYIYGESLERTYFDNEAFPDLTPELGALKNEGLDFSHTQQLPGTNYTIAGMVASQCGIPLFAPFEGNASASVSSFFPQNICLGDILKNSGYQNYFVQGANLRFAGKDVFLKSHGFDHLYGSEELKSVVADPHYRNDWGFYDDTVLDEAWKKFEELSRSGQRFSLFTLTVDTHHPDGFISRTCNRKKYDFDGKPNQSFSAVSCSQENIATFINKIKASPWFKDTVIVVSSDHLAMNNTAWKYLNKQDRNNLFFVIRGDKPQQETLAVKRNTMDNGATVLDILGGDNYLGLGRSSLSGQSMSEIFLNIKEKTLAWKPDIIRLWKFPKEMKEFTIDQQKNMIAFSGSHFRLPLLLRVSDKRVEPLPESEYSAPLRFQLADFAPRDNFVWVDRCYKMAQLWAPELALSTDWCVSQGQLGGQQIVQHVDKAIWKGKTAFKDTVIDMARYKGNVDTLKIVDNDIRYKADSFIFNVAGAPEEVKQFSGISRPESWGRWSNAQLGDEVKIEYKHPLPKKFDLVITAKAYGNNASRPIPVRVGNEEQTLVLGNEVTTTTLHFDNPTDADTLVIVPPEPVSTNEGNILGHSPRKLGIGMVEIKVVEREG.

4 consecutive transmembrane segments (helical) span residues 1–21 (MSELLSFALFLASVLIYAWKA), 26–46 (WWFAATLTVLGLFVVLNITLF), 77–97 (ILPGIGIVLGLTAVFGALGWI), and 108–128 (FGYSLLALLLALGSVDASPAF).

The protein belongs to the OpgB family.

It is found in the cell inner membrane. It catalyses the reaction a phosphatidylglycerol + a membrane-derived-oligosaccharide D-glucose = a 1,2-diacyl-sn-glycerol + a membrane-derived-oligosaccharide 6-(glycerophospho)-D-glucose.. It functions in the pathway glycan metabolism; osmoregulated periplasmic glucan (OPG) biosynthesis. Transfers a phosphoglycerol residue from phosphatidylglycerol to the membrane-bound nascent glucan backbones. In Escherichia coli O127:H6 (strain E2348/69 / EPEC), this protein is Phosphoglycerol transferase I.